A 515-amino-acid chain; its full sequence is GMP synthase [glutamine-hydrolyzing] (515 aa).

The Glutamine amidotransferase type-1 domain maps to T10–G200. Catalysis depends on C87, which acts as the Nucleophile. Residues H174 and E176 contribute to the active site. Residues W201–R390 form the GMPS ATP-PPase domain. An ATP-binding site is contributed by S228–S234.

As to quaternary structure, homodimer.

The enzyme catalyses XMP + L-glutamine + ATP + H2O = GMP + L-glutamate + AMP + diphosphate + 2 H(+). It functions in the pathway purine metabolism; GMP biosynthesis; GMP from XMP (L-Gln route): step 1/1. Catalyzes the synthesis of GMP from XMP. This Bacillus thuringiensis subsp. konkukian (strain 97-27) protein is GMP synthase [glutamine-hydrolyzing].